We begin with the raw amino-acid sequence, 142 residues long: Hemoglobin subunit alpha-A (142 aa).

The region spanning 2–142 is the Globin domain; the sequence is VLTAGDKANV…VATALTSKYR (141 aa). His-59 and His-88 together coordinate heme b.

Belongs to the globin family. In terms of assembly, heterotetramer of two alpha-A chains and two beta chains. In terms of tissue distribution, red blood cells.

In terms of biological role, involved in oxygen transport from the lung to the various peripheral tissues. The sequence is that of Hemoglobin subunit alpha-A from Chelonoidis niger (Galapagos giant tortoise).